The primary structure comprises 185 residues: Ribosome-recycling factor (185 aa).

It belongs to the RRF family.

The protein resides in the cytoplasm. In terms of biological role, responsible for the release of ribosomes from messenger RNA at the termination of protein biosynthesis. May increase the efficiency of translation by recycling ribosomes from one round of translation to another. The protein is Ribosome-recycling factor of Bacillus licheniformis (strain ATCC 14580 / DSM 13 / JCM 2505 / CCUG 7422 / NBRC 12200 / NCIMB 9375 / NCTC 10341 / NRRL NRS-1264 / Gibson 46).